The chain runs to 274 residues: Serine/threonine-protein kinase 1 (274 aa).

Residues 16–273 (AVLAPKVVNG…HSFLASRHDY (258 aa)) form the Protein kinase domain. ATP is bound by residues 22 to 30 (VVNGRFGKM) and K46. D134 functions as the Proton acceptor in the catalytic mechanism.

This sequence belongs to the protein kinase superfamily. Ser/Thr protein kinase family.

The enzyme catalyses L-seryl-[protein] + ATP = O-phospho-L-seryl-[protein] + ADP + H(+). The catalysed reaction is L-threonyl-[protein] + ATP = O-phospho-L-threonyl-[protein] + ADP + H(+). The polypeptide is Serine/threonine-protein kinase 1 (PK1) (Orgyia pseudotsugata multicapsid polyhedrosis virus (OpMNPV)).